We begin with the raw amino-acid sequence, 355 residues long: Ribosomal RNA small subunit methyltransferase H (355 aa).

S-adenosyl-L-methionine contacts are provided by residues 47-49 (GGY), Asp-65, Phe-92, Asp-113, and Gln-120. Positions 332–355 (LLPLATLPETSHPKSASHSKSRRR) are disordered. Over residues 346 to 355 (SASHSKSRRR) the composition is skewed to basic residues.

It belongs to the methyltransferase superfamily. RsmH family.

Its subcellular location is the cytoplasm. It catalyses the reaction cytidine(1402) in 16S rRNA + S-adenosyl-L-methionine = N(4)-methylcytidine(1402) in 16S rRNA + S-adenosyl-L-homocysteine + H(+). Its function is as follows. Specifically methylates the N4 position of cytidine in position 1402 (C1402) of 16S rRNA. The polypeptide is Ribosomal RNA small subunit methyltransferase H (Beijerinckia indica subsp. indica (strain ATCC 9039 / DSM 1715 / NCIMB 8712)).